The primary structure comprises 399 residues: Cyclic dehypoxanthine futalosine synthase (399 aa).

Residues 56 to 288 (ATYIIERNIN…IAIARVFLDN (233 aa)) form the Radical SAM core domain. Cys70, Cys74, and Cys77 together coordinate [4Fe-4S] cluster.

The protein belongs to the radical SAM superfamily. MqnC family. [4Fe-4S] cluster serves as cofactor.

The catalysed reaction is dehypoxanthine futalosine + S-adenosyl-L-methionine = cyclic dehypoxanthinylfutalosinate + 5'-deoxyadenosine + L-methionine + H(+). Its pathway is quinol/quinone metabolism; menaquinone biosynthesis. Its function is as follows. Radical SAM enzyme that catalyzes the cyclization of dehypoxanthine futalosine (DHFL) into cyclic dehypoxanthine futalosine (CDHFL), a step in the biosynthesis of menaquinone (MK, vitamin K2). The sequence is that of Cyclic dehypoxanthine futalosine synthase from Streptomyces coelicolor (strain ATCC BAA-471 / A3(2) / M145).